We begin with the raw amino-acid sequence, 332 residues long: tRNA-dihydrouridine(20/20a) synthase (332 aa).

Residues P22–M24 and Q75 each bind FMN. Residue C105 is the Proton donor of the active site. Residues K144, H177, N217 to G219, and G239 to R240 each bind FMN.

This sequence belongs to the Dus family. DusA subfamily. Requires FMN as cofactor.

The enzyme catalyses 5,6-dihydrouridine(20) in tRNA + NADP(+) = uridine(20) in tRNA + NADPH + H(+). The catalysed reaction is 5,6-dihydrouridine(20) in tRNA + NAD(+) = uridine(20) in tRNA + NADH + H(+). It carries out the reaction 5,6-dihydrouridine(20a) in tRNA + NADP(+) = uridine(20a) in tRNA + NADPH + H(+). It catalyses the reaction 5,6-dihydrouridine(20a) in tRNA + NAD(+) = uridine(20a) in tRNA + NADH + H(+). In terms of biological role, catalyzes the synthesis of 5,6-dihydrouridine (D), a modified base found in the D-loop of most tRNAs, via the reduction of the C5-C6 double bond in target uridines. Specifically modifies U20 and U20a in tRNAs. This is tRNA-dihydrouridine(20/20a) synthase from Xylella fastidiosa (strain Temecula1 / ATCC 700964).